The chain runs to 130 residues: Small ribosomal subunit protein uS11 (130 aa).

Belongs to the universal ribosomal protein uS11 family. As to quaternary structure, part of the 30S ribosomal subunit. Interacts with proteins S7 and S18. Binds to IF-3.

In terms of biological role, located on the platform of the 30S subunit, it bridges several disparate RNA helices of the 16S rRNA. Forms part of the Shine-Dalgarno cleft in the 70S ribosome. The protein is Small ribosomal subunit protein uS11 of Campylobacter jejuni subsp. jejuni serotype O:6 (strain 81116 / NCTC 11828).